Consider the following 791-residue polypeptide: Putative DNA (cytosine-5)-methyltransferase CMT1 (791 aa).

Residues 37 to 59 form a disordered region; sequence YQSKKTKLQAPTKKPANKGGKKE. In terms of domain architecture, BAH spans 79-199; that stretch reads VLINLNDDVY…VPYLNFTSAD (121 aa). Residues 225–768 enclose the SAM-dependent MTase C5-type domain; sequence KFLLDLYSGC…YAFGMASQGL (544 aa). Residues 308 to 333 adopt a coiled-coil conformation; that stretch reads VESISELEDEEVEENDDIDEASTGAE. A Chromo domain is found at 339 to 404; the sequence is FEVEKFLGIM…DGFKSHLLPL (66 aa). Cys-417 is an active-site residue.

The protein belongs to the class I-like SAM-binding methyltransferase superfamily. C5-methyltransferase family. As to expression, expressed in flowers. Not detected in leaves, roots, seedlings and plants prior formation of flower buds.

The protein localises to the nucleus. It catalyses the reaction a 2'-deoxycytidine in DNA + S-adenosyl-L-methionine = a 5-methyl-2'-deoxycytidine in DNA + S-adenosyl-L-homocysteine + H(+). In terms of biological role, may be involved in the CpXpG methylation and in gene silencing. The polypeptide is Putative DNA (cytosine-5)-methyltransferase CMT1 (CMT1) (Arabidopsis thaliana (Mouse-ear cress)).